The chain runs to 370 residues: Glutamate 5-kinase (370 aa).

Lys13 is a binding site for ATP. Substrate is bound by residues Ser52, Asp139, and Asn151. Residues 171-172 (SD) and 211-217 (SGGMKSK) each bind ATP. One can recognise a PUA domain in the interval 275–353 (KGELVLDRGA…AEIEAVLGYR (79 aa)).

The protein belongs to the glutamate 5-kinase family.

The protein localises to the cytoplasm. It carries out the reaction L-glutamate + ATP = L-glutamyl 5-phosphate + ADP. It participates in amino-acid biosynthesis; L-proline biosynthesis; L-glutamate 5-semialdehyde from L-glutamate: step 1/2. Functionally, catalyzes the transfer of a phosphate group to glutamate to form L-glutamate 5-phosphate. This Thermus thermophilus (strain ATCC BAA-163 / DSM 7039 / HB27) protein is Glutamate 5-kinase.